Consider the following 339-residue polypeptide: 1-aminocyclopropane-1-carboxylate deaminase (339 aa).

Position 52 is an N6-(pyridoxal phosphate)lysine (Lys52). The active-site Nucleophile is Ser79.

Belongs to the ACC deaminase/D-cysteine desulfhydrase family. Homotrimer. Requires pyridoxal 5'-phosphate as cofactor.

The enzyme catalyses 1-aminocyclopropane-1-carboxylate + H2O = 2-oxobutanoate + NH4(+). In terms of biological role, catalyzes a cyclopropane ring-opening reaction, the irreversible conversion of 1-aminocyclopropane-1-carboxylate (ACC) to ammonia and alpha-ketobutyrate. Allows growth on ACC as a nitrogen source. The sequence is that of 1-aminocyclopropane-1-carboxylate deaminase from Rhizobium leguminosarum bv. viciae.